Here is a 214-residue protein sequence, read N- to C-terminus: Nucleoside triphosphate pyrophosphatase (214 aa).

Catalysis depends on Asp79, which acts as the Proton acceptor.

It belongs to the Maf family. A divalent metal cation serves as cofactor.

It is found in the cytoplasm. The enzyme catalyses a ribonucleoside 5'-triphosphate + H2O = a ribonucleoside 5'-phosphate + diphosphate + H(+). It catalyses the reaction a 2'-deoxyribonucleoside 5'-triphosphate + H2O = a 2'-deoxyribonucleoside 5'-phosphate + diphosphate + H(+). In terms of biological role, nucleoside triphosphate pyrophosphatase. May have a dual role in cell division arrest and in preventing the incorporation of modified nucleotides into cellular nucleic acids. In Rhodococcus opacus (strain B4), this protein is Nucleoside triphosphate pyrophosphatase.